Here is a 661-residue protein sequence, read N- to C-terminus: Protein WHI3 (661 aa).

The span at 14-31 (ASSSDNVVSSTTNTHNIS) shows a compositional bias: low complexity. Residues 14–58 (ASSSDNVVSSTTNTHNISPSHRSSLNLNTTSHPHEASGRGSASGE) are disordered. A compositionally biased stretch (polar residues) spans 32–44 (PSHRSSLNLNTTS). Phosphoserine is present on serine 231. 3 stretches are compositionally biased toward low complexity: residues 237-272 (DPFS…SPQQ), 383-409 (NTSA…SASS), and 496-508 (KNNS…SNIT). Disordered regions lie at residues 237–280 (DPFS…QVNS), 383–410 (NTSA…ASSQ), 469–508 (EHMY…SNIT), and 613–661 (SSKG…HIKN). The RRM domain maps to 538–625 (NTLYVGNLPS…GGIRLSFSKN (88 aa)). Over residues 628-647 (GVRGPNSRRGGSGNPNPNVN) the composition is skewed to low complexity. Residues 648–661 (MLSSYNSNVGHIKN) show a composition bias toward polar residues.

In terms of biological role, involved in size control and cell cycle. This Saccharomyces cerevisiae (strain ATCC 204508 / S288c) (Baker's yeast) protein is Protein WHI3 (WHI3).